Consider the following 310-residue polypeptide: Malate dehydrogenase (310 aa).

NAD(+)-binding positions include 7-12 (GAGNVG) and Asp-32. Substrate contacts are provided by Arg-81 and Arg-87. NAD(+)-binding positions include Asn-94 and 117–119 (VSN). 2 residues coordinate substrate: Asn-119 and Arg-150. The active-site Proton acceptor is His-174.

Belongs to the LDH/MDH superfamily. MDH type 3 family.

The enzyme catalyses (S)-malate + NAD(+) = oxaloacetate + NADH + H(+). Functionally, catalyzes the reversible oxidation of malate to oxaloacetate. In Chlorobium chlorochromatii (strain CaD3), this protein is Malate dehydrogenase.